We begin with the raw amino-acid sequence, 541 residues long: Chaperonin GroEL (541 aa).

Residues Thr29–Pro32, Asp86–Thr90, Gly413, and Asp494 each bind ATP.

This sequence belongs to the chaperonin (HSP60) family. Forms a cylinder of 14 subunits composed of two heptameric rings stacked back-to-back. Interacts with the co-chaperonin GroES.

It localises to the cytoplasm. The enzyme catalyses ATP + H2O + a folded polypeptide = ADP + phosphate + an unfolded polypeptide.. Together with its co-chaperonin GroES, plays an essential role in assisting protein folding. The GroEL-GroES system forms a nano-cage that allows encapsulation of the non-native substrate proteins and provides a physical environment optimized to promote and accelerate protein folding. The protein is Chaperonin GroEL of Acetivibrio thermocellus (strain ATCC 27405 / DSM 1237 / JCM 9322 / NBRC 103400 / NCIMB 10682 / NRRL B-4536 / VPI 7372) (Clostridium thermocellum).